The following is a 538-amino-acid chain: Poly [ADP-ribose] polymerase 2 (538 aa).

The 94-residue stretch at 1 to 94 (MSIINDENGR…RDDEPVPNKY (94 aa)) folds into the WGR domain. Residues 104–133 (RQTEKEVKKEEPEPEPKVDEKNTRGRKKRG) form a disordered region. Over residues 105–126 (QTEKEVKKEEPEPEPKVDEKNT) the composition is skewed to basic and acidic residues. Positions 148 to 285 (VEEVNEKLKE…GSIEASLELK (138 aa)) constitute a PARP alpha-helical domain. The PARP catalytic domain occupies 309–535 (EPVSEEIAGK…VKVDRLTAKE (227 aa)). The disordered stretch occupies residues 357–381 (QEVPKKRGRKSTKTAAPTVPPPTTK).

Belongs to the ARTD/PARP family.

It is found in the nucleus. It catalyses the reaction NAD(+) + (ADP-D-ribosyl)n-acceptor = nicotinamide + (ADP-D-ribosyl)n+1-acceptor + H(+).. The enzyme catalyses L-aspartyl-[protein] + NAD(+) = 4-O-(ADP-D-ribosyl)-L-aspartyl-[protein] + nicotinamide. It carries out the reaction L-glutamyl-[protein] + NAD(+) = 5-O-(ADP-D-ribosyl)-L-glutamyl-[protein] + nicotinamide. With respect to regulation, inhibited by N-(6-oxo-5,6-dihydrophenanthridin-2-yl)-N,N-dimethylacetamide HCl (PJ34), 1,5-dihydroxyisoquinoline (DHQ) and 3-aminobenzamide (3AB). Poly[ADP-ribose] polymerase modifies various nuclear proteins by poly(ADP-ribosyl)ation, a post-translational modification synthesized after DNA damage that appears as an obligatory step in a detection/signaling pathway leading to the reparation of DNA strand breaks and programmed cell death. This Caenorhabditis elegans protein is Poly [ADP-ribose] polymerase 2.